Reading from the N-terminus, the 235-residue chain is Secreted RxLR effector protein 27 (235 aa).

A signal peptide spans 1–25 (MTNLFTRHTRRSLTALALLSGGVYA). The RxLR-dEER signature appears at 36–60 (RSLRVFVTGGQVLWDYRIHFKGIER).

This sequence belongs to the RxLR effector family.

The protein resides in the secreted. It is found in the host cytoplasm. The protein localises to the host nucleus. In terms of biological role, effector that acts as a broad suppressor of cell death to interrupt plant immunity. Inhibits cell death induced by cell death-inducing proteins, including the PAMP elicitor INF1 from P.infestans. The chain is Secreted RxLR effector protein 27 from Plasmopara viticola (Downy mildew of grapevine).